Reading from the N-terminus, the 800-residue chain is MNQKVLQTLEYDKIKSQLSDFLSTPIGRQEADALQPITDVHIINYWLQETADAMMIDRLKGGIPLAKLADITPHLKRLNIQASLSATELAEIGNVLRNTSAISNFFIQMKDESIGESLEVLIEQAEQLETLPEVTKSIQTAIDSTGRINDEASYELKSVRGKIVGHENAIKNKMQEFTKGKTAQYLSDPIVTIRSDRYVLPVKAEYRSQFGGVVHDQSQTGLTLYIEPQAVVELSNKLSELRVKESAEEQRVLQELSAELEPHTNEIQQNVQILGHFDFVNAKARLAARLDAMQPTVSVENHISLRQAWHPLLDKKIAVANDISLGDSYKTIIITGPNTGGKTITIKTLGLLQLMAQSGLFITTRQPSTIGIFDEVFADIGDEQSIEQNLSTFSSHMANIVSMLDHIDDKTLVIFDELGAGTDPAEGAALAIAILDKVASLGAYTIATTHYPELKLYGYNRPETKNASMVFDVETLQPTYQFLMGVPGQSNALAIAKRLGFGEDVIGAAMALTDESDQDLNNMIADLVAQRDEVKKNNEELRSQLKATEEKSEALSEEQSKLEKERAHVILDAKNEANHIVAATKKQAEQLISEIRKERLRAGQRGELTEQELQARKGKLDQLRQNDSLEKNKILQKAKKVKELAPGDEITVRSYSQQGTLVKKHKNGQWEVEMGILKMLVDEDDIVKTEATVKAQKGKAKKKQQKIIRKTTSSGSTRASVKSSLDLRGVRYEAALTELDRYLDTAVLANISPVEIIHGKGTGALRQGVTEFLRSDRRVKSYHFASANAGGDGATIVELK.

336–343 (GPNTGGKT) lines the ATP pocket. A Smr domain is found at 725–800 (LDLRGVRYEA…GDGATIVELK (76 aa)).

It belongs to the DNA mismatch repair MutS family. MutS2 subfamily. In terms of assembly, homodimer. Binds to stalled ribosomes, contacting rRNA.

Its function is as follows. Endonuclease that is involved in the suppression of homologous recombination and thus may have a key role in the control of bacterial genetic diversity. Functionally, acts as a ribosome collision sensor, splitting the ribosome into its 2 subunits. Detects stalled/collided 70S ribosomes which it binds and splits by an ATP-hydrolysis driven conformational change. Acts upstream of the ribosome quality control system (RQC), a ribosome-associated complex that mediates the extraction of incompletely synthesized nascent chains from stalled ribosomes and their subsequent degradation. Probably generates substrates for RQC. The protein is Endonuclease MutS2 of Leuconostoc mesenteroides subsp. mesenteroides (strain ATCC 8293 / DSM 20343 / BCRC 11652 / CCM 1803 / JCM 6124 / NCDO 523 / NBRC 100496 / NCIMB 8023 / NCTC 12954 / NRRL B-1118 / 37Y).